We begin with the raw amino-acid sequence, 586 residues long: Aspartate--tRNA(Asp/Asn) ligase (586 aa).

Position 172 (glutamate 172) interacts with L-aspartate. Residues 196–199 are aspartate; the sequence is QLYK. An L-aspartate-binding site is contributed by arginine 218. Residues 218–220 and glutamine 227 contribute to the ATP site; that span reads RDE. Residue histidine 446 coordinates L-aspartate. Glutamate 480 contributes to the ATP binding site. Arginine 487 is an L-aspartate binding site. 532 to 535 is an ATP binding site; the sequence is GIDR.

This sequence belongs to the class-II aminoacyl-tRNA synthetase family. Type 1 subfamily. As to quaternary structure, homodimer.

It is found in the cytoplasm. The catalysed reaction is tRNA(Asx) + L-aspartate + ATP = L-aspartyl-tRNA(Asx) + AMP + diphosphate. Aspartyl-tRNA synthetase with relaxed tRNA specificity since it is able to aspartylate not only its cognate tRNA(Asp) but also tRNA(Asn). Reaction proceeds in two steps: L-aspartate is first activated by ATP to form Asp-AMP and then transferred to the acceptor end of tRNA(Asp/Asn). This chain is Aspartate--tRNA(Asp/Asn) ligase, found in Borrelia garinii subsp. bavariensis (strain ATCC BAA-2496 / DSM 23469 / PBi) (Borreliella bavariensis).